The chain runs to 754 residues: Gelsolin, cytoplasmic (754 aa).

The actin-severing stretch occupies residues 1–120 (MVPAFEGAGA…RYLKGGVASG (120 aa)). The stretch at 22 to 71 (FEVVPYPKEKYGQFYQGDSYIVLYTRDVNGNLSWDLHFWLGSETSQDEAG) is one Gelsolin-like 1 repeat. Positions 68–71 (DEAG) are actin-actin interfilament contact point. A 1,2-diacyl-sn-glycero-3-phospho-(1D-myo-inositol-4,5-bisphosphate)-binding positions include 101 to 108 (LFLSRFKK) and 133 to 141 (RLFHVKGRR). The Gelsolin-like 2 repeat unit spans residues 143–183 (IRIRQVEVGVGSMNKGDCFILDCGSQVYAYMGPSSRKMDRL). The disordered stretch occupies residues 209–238 (TASGSEAGESSPGLGGGSPDDVADEDTGVD). Positions 210–220 (ASGSEAGESSP) are enriched in low complexity. Gelsolin-like repeat units lie at residues 266–306 (NMIG…KEKV), 414–463 (LKLE…DEKA), 538–580 (FDTR…EEKA), and 643–684 (LRVN…QEKE). The segment at 386–751 (LLQKNAGPAF…MKAQVPETNA (366 aa)) is actin-binding, Ca-sensitive. Ca(2+) contacts are provided by G430, D431, E461, D556, E578, D659, D660, and E682.

The protein belongs to the villin/gelsolin family. Tail muscle.

It is found in the cytoplasm. The protein localises to the cytoskeleton. In terms of biological role, calcium-regulated, actin-modulating protein that binds to the plus (or barbed) ends of actin monomers or filaments, preventing monomer exchange (end-blocking or capping). It can promote the assembly of monomers into filaments (nucleation) as well as sever filaments already formed. This is Gelsolin, cytoplasmic from Homarus americanus (American lobster).